Here is a 354-residue protein sequence, read N- to C-terminus: UPF0283 membrane protein CGSHiGG_02710 (354 aa).

The next 3 helical transmembrane spans lie at 57–77 (LLKF…VQWI), 87–107 (IYLA…KEII), and 211–231 (ESAV…FIAW).

The protein belongs to the UPF0283 family.

It localises to the cell inner membrane. This chain is UPF0283 membrane protein CGSHiGG_02710, found in Haemophilus influenzae (strain PittGG).